A 309-amino-acid polypeptide reads, in one-letter code: Olfactory receptor 1A1 (309 aa).

The Extracellular segment spans residues 1–25 (MRENNQSSTLEFILLGVTGQQEQED). Residue N5 is glycosylated (N-linked (GlcNAc...) asparagine). The chain crosses the membrane as a helical span at residues 26 to 49 (FFYILFLFIYPITLIGNLLIVLAI). At 50–57 (CSDVRLHN) the chain is on the cytoplasmic side. The helical transmembrane segment at 58–79 (PMYFLLANLSLVDIFFSSVTIP) threads the bilayer. Over 80–100 (KMLANHLLGSKSISFGGCLTQ) the chain is Extracellular. A disulfide bridge links C97 with C189. Residues 101–120 (MYFMIALGNTDSYILAAMAY) form a helical membrane-spanning segment. Residues 121 to 139 (DRAVAISRPLHYTTIMSPR) are Cytoplasmic-facing. A helical transmembrane segment spans residues 140-158 (SCIWLIAGSWVIGNANALP). Residues 159–195 (HTLLTASLSFCGNQEVANFYCDITPLLKLSCSDIHFH) lie on the Extracellular side of the membrane. The helical transmembrane segment at 196–218 (VKMMYLGVGIFSVPLLCIIVSYI) threads the bilayer. At 219-235 (RVFSTVFQVPSTKGVLK) the chain is on the cytoplasmic side. A helical membrane pass occupies residues 236-258 (AFSTCGSHLTVVSLYYGTVMGTY). Residues 259–270 (FRPLTNYSLKDA) are Extracellular-facing. The N-linked (GlcNAc...) asparagine glycan is linked to N264. Residues 271–290 (VITVMYTAVTPMLNPFIYSL) traverse the membrane as a helical segment. Over 291–309 (RNRDMKAALRKLFNKRISS) the chain is Cytoplasmic.

The protein belongs to the G-protein coupled receptor 1 family.

The protein localises to the cell membrane. In terms of biological role, odorant receptor. This is Olfactory receptor 1A1 (OR1A1) from Homo sapiens (Human).